The chain runs to 115 residues: Large ribosomal subunit protein bL19 (115 aa).

The protein belongs to the bacterial ribosomal protein bL19 family.

In terms of biological role, this protein is located at the 30S-50S ribosomal subunit interface and may play a role in the structure and function of the aminoacyl-tRNA binding site. In Buchnera aphidicola subsp. Acyrthosiphon pisum (strain 5A), this protein is Large ribosomal subunit protein bL19.